A 395-amino-acid chain; its full sequence is Phosphoglycerate kinase (395 aa).

Substrate-binding positions include 21–23, arginine 36, 59–62, arginine 113, and arginine 146; these read DLN and HLGR. ATP contacts are provided by residues lysine 197, glutamate 324, and 350–353; that span reads GGDT.

It belongs to the phosphoglycerate kinase family. Monomer.

It is found in the cytoplasm. The enzyme catalyses (2R)-3-phosphoglycerate + ATP = (2R)-3-phospho-glyceroyl phosphate + ADP. The protein operates within carbohydrate degradation; glycolysis; pyruvate from D-glyceraldehyde 3-phosphate: step 2/5. The sequence is that of Phosphoglycerate kinase from Acinetobacter baumannii (strain AB307-0294).